Reading from the N-terminus, the 154-residue chain is Aspartate carbamoyltransferase regulatory chain (154 aa).

Zn(2+)-binding residues include C109, C114, C138, and C141.

This sequence belongs to the PyrI family. As to quaternary structure, contains catalytic and regulatory chains. The cofactor is Zn(2+).

Involved in allosteric regulation of aspartate carbamoyltransferase. This chain is Aspartate carbamoyltransferase regulatory chain, found in Photorhabdus laumondii subsp. laumondii (strain DSM 15139 / CIP 105565 / TT01) (Photorhabdus luminescens subsp. laumondii).